Reading from the N-terminus, the 392-residue chain is Putative nicotinate phosphoribosyltransferase (392 aa).

Nicotinate is bound by residues Tyr21, Phe138, and Thr179. His182 bears the Phosphohistidine mark. Residue Arg235 coordinates nicotinate. Residues Ser240, Gly272, and Thr293 each contribute to the 5-phospho-alpha-D-ribose 1-diphosphate site. Zn(2+) contacts are provided by Cys330, Cys333, Cys348, and Cys350.

It belongs to the NAPRTase family. Highly divergent. As to quaternary structure, homodimer. Forms a trimer of dimers in the crystal. In terms of processing, transiently phosphorylated on a His residue during the reaction cycle. Phosphorylation strongly increases the affinity for substrates and increases the rate of nicotinate D-ribonucleotide production. Dephosphorylation regenerates the low-affinity form of the enzyme, leading to product release.

The enzyme catalyses nicotinate + 5-phospho-alpha-D-ribose 1-diphosphate + ATP + H2O = nicotinate beta-D-ribonucleotide + ADP + phosphate + diphosphate. The protein operates within cofactor biosynthesis; NAD(+) biosynthesis; nicotinate D-ribonucleotide from nicotinate: step 1/1. Functionally, catalyzes the synthesis of beta-nicotinate D-ribonucleotide from nicotinate and 5-phospho-D-ribose 1-phosphate at the expense of ATP. The sequence is that of Putative nicotinate phosphoribosyltransferase from Thermoplasma acidophilum (strain ATCC 25905 / DSM 1728 / JCM 9062 / NBRC 15155 / AMRC-C165).